The sequence spans 448 residues: Homogentisate 1,2-dioxygenase (448 aa).

The Proton acceptor role is filled by histidine 303. Fe cation-binding residues include histidine 346 and glutamate 352. Residues tyrosine 361 and histidine 382 each contribute to the homogentisate site. Histidine 382 contributes to the Fe cation binding site.

It belongs to the homogentisate dioxygenase family. As to quaternary structure, hexamer; dimer of trimers. Fe cation serves as cofactor.

The enzyme catalyses homogentisate + O2 = 4-maleylacetoacetate + H(+). It participates in amino-acid degradation; L-phenylalanine degradation; acetoacetate and fumarate from L-phenylalanine: step 4/6. In terms of biological role, involved in the catabolism of homogentisate (2,5-dihydroxyphenylacetate or 2,5-OH-PhAc), a central intermediate in the degradation of phenylalanine and tyrosine. Catalyzes the oxidative ring cleavage of the aromatic ring of homogentisate to yield maleylacetoacetate. This is Homogentisate 1,2-dioxygenase from Rhodopseudomonas palustris (strain HaA2).